The following is a 140-amino-acid chain: Transcription antitermination protein NusB (140 aa).

It belongs to the NusB family.

Functionally, involved in transcription antitermination. Required for transcription of ribosomal RNA (rRNA) genes. Binds specifically to the boxA antiterminator sequence of the ribosomal RNA (rrn) operons. The chain is Transcription antitermination protein NusB from Thermoanaerobacter pseudethanolicus (strain ATCC 33223 / 39E) (Clostridium thermohydrosulfuricum).